The following is a 127-amino-acid chain: Large ribosomal subunit protein bL21 (127 aa).

Residues 102-127 (TDNAKPTKGPRPKKAKAEAPAADAAE) form a disordered region.

Belongs to the bacterial ribosomal protein bL21 family. Part of the 50S ribosomal subunit. Contacts protein L20.

In terms of biological role, this protein binds to 23S rRNA in the presence of protein L20. The sequence is that of Large ribosomal subunit protein bL21 from Bradyrhizobium sp. (strain BTAi1 / ATCC BAA-1182).